Here is a 305-residue protein sequence, read N- to C-terminus: Probable pyridoxal 5'-phosphate synthase subunit pdx1 (305 aa).

Asp-33 provides a ligand contact to D-ribose 5-phosphate. The active-site Schiff-base intermediate with D-ribose 5-phosphate is Lys-90. Gly-162 is a D-ribose 5-phosphate binding site. A D-glyceraldehyde 3-phosphate-binding site is contributed by Arg-174. D-ribose 5-phosphate is bound by residues Gly-223 and 244-245; that span reads GS.

The protein belongs to the PdxS/SNZ family. As to quaternary structure, homohexamer.

The catalysed reaction is aldehydo-D-ribose 5-phosphate + D-glyceraldehyde 3-phosphate + L-glutamine = pyridoxal 5'-phosphate + L-glutamate + phosphate + 3 H2O + H(+). It functions in the pathway cofactor biosynthesis; pyridoxal 5'-phosphate biosynthesis. Functionally, catalyzes the formation of pyridoxal 5'-phosphate from ribose 5-phosphate (RBP), glyceraldehyde 3-phosphate (G3P) and ammonia. The ammonia is provided by pdx2. Can also use ribulose 5-phosphate and dihydroxyacetone phosphate as substrates, resulting from enzyme-catalyzed isomerization of RBP and G3P, respectively. This chain is Probable pyridoxal 5'-phosphate synthase subunit pdx1 (pdx1), found in Dictyostelium discoideum (Social amoeba).